Consider the following 190-residue polypeptide: Threonylcarbamoyl-AMP synthase (190 aa).

The 181-residue stretch at 10–190 folds into the YrdC-like domain; it reads PQDKESVYRH…DWHSRQVIRA (181 aa).

It belongs to the SUA5 family. TsaC subfamily.

It localises to the cytoplasm. It carries out the reaction L-threonine + hydrogencarbonate + ATP = L-threonylcarbamoyladenylate + diphosphate + H2O. Its function is as follows. Required for the formation of a threonylcarbamoyl group on adenosine at position 37 (t(6)A37) in tRNAs that read codons beginning with adenine. Catalyzes the conversion of L-threonine, HCO(3)(-)/CO(2) and ATP to give threonylcarbamoyl-AMP (TC-AMP) as the acyladenylate intermediate, with the release of diphosphate. This chain is Threonylcarbamoyl-AMP synthase, found in Dichelobacter nodosus (strain VCS1703A).